The sequence spans 331 residues: Biotin synthase (331 aa).

In terms of domain architecture, Radical SAM core spans 43 to 267 (NTVQVSTLLS…LMPASYVRLS (225 aa)). 3 residues coordinate [4Fe-4S] cluster: C58, C62, and C65. [2Fe-2S] cluster is bound by residues C102, C133, C193, and R265.

Belongs to the radical SAM superfamily. Biotin synthase family. Homodimer. It depends on [4Fe-4S] cluster as a cofactor. [2Fe-2S] cluster serves as cofactor.

The enzyme catalyses (4R,5S)-dethiobiotin + (sulfur carrier)-SH + 2 reduced [2Fe-2S]-[ferredoxin] + 2 S-adenosyl-L-methionine = (sulfur carrier)-H + biotin + 2 5'-deoxyadenosine + 2 L-methionine + 2 oxidized [2Fe-2S]-[ferredoxin]. The protein operates within cofactor biosynthesis; biotin biosynthesis; biotin from 7,8-diaminononanoate: step 2/2. In terms of biological role, catalyzes the conversion of dethiobiotin (DTB) to biotin by the insertion of a sulfur atom into dethiobiotin via a radical-based mechanism. This Alkalilimnicola ehrlichii (strain ATCC BAA-1101 / DSM 17681 / MLHE-1) protein is Biotin synthase.